The primary structure comprises 194 residues: Imidazoleglycerol-phosphate dehydratase (194 aa).

It belongs to the imidazoleglycerol-phosphate dehydratase family.

It localises to the cytoplasm. It catalyses the reaction D-erythro-1-(imidazol-4-yl)glycerol 3-phosphate = 3-(imidazol-4-yl)-2-oxopropyl phosphate + H2O. It participates in amino-acid biosynthesis; L-histidine biosynthesis; L-histidine from 5-phospho-alpha-D-ribose 1-diphosphate: step 6/9. This Caldanaerobacter subterraneus subsp. tengcongensis (strain DSM 15242 / JCM 11007 / NBRC 100824 / MB4) (Thermoanaerobacter tengcongensis) protein is Imidazoleglycerol-phosphate dehydratase.